Here is a 181-residue protein sequence, read N- to C-terminus: Nucleoside triphosphate/diphosphate phosphatase (181 aa).

Arg-26 serves as the catalytic Proton donor. Mg(2+)-binding residues include Asn-90, Asp-106, Asp-108, Asp-110, Asp-123, and Glu-126.

This sequence belongs to the Ntdp family. It depends on Mg(2+) as a cofactor.

The enzyme catalyses a ribonucleoside 5'-triphosphate + H2O = a ribonucleoside 5'-diphosphate + phosphate + H(+). It carries out the reaction a ribonucleoside 5'-diphosphate + H2O = a ribonucleoside 5'-phosphate + phosphate + H(+). Has nucleoside phosphatase activity towards nucleoside triphosphates and nucleoside diphosphates. This Staphylococcus carnosus (strain TM300) protein is Nucleoside triphosphate/diphosphate phosphatase.